A 71-amino-acid chain; its full sequence is Prokaryotic ubiquitin-like protein Pup (71 aa).

The segment covering 1–18 (MATRDSGGQSQTGRSQQG) has biased composition (low complexity). Positions 1-42 (MATRDSGGQSQTGRSQQGEEIEDVTTEASPEVAERHAEITED) are disordered. The segment at 27–65 (EASPEVAERHAEITEDVDDLLDEIDSVLEENAEEFVRGY) is ARC ATPase binding. Positions 31–60 (EVAERHAEITEDVDDLLDEIDSVLEENAEE) form a coiled coil. Glu-71 is covalently cross-linked (Isoglutamyl lysine isopeptide (Glu-Lys) (interchain with K-? in acceptor proteins)).

Belongs to the prokaryotic ubiquitin-like protein family. In terms of assembly, strongly interacts with the proteasome-associated ATPase ARC through a hydrophobic interface; the interacting region of Pup lies in its C-terminal half. There is one Pup binding site per ARC hexamer ring.

The protein operates within protein degradation; proteasomal Pup-dependent pathway. Its function is as follows. Protein modifier that is covalently attached to lysine residues of substrate proteins, thereby targeting them for proteasomal degradation. The tagging system is termed pupylation. The polypeptide is Prokaryotic ubiquitin-like protein Pup (Salinispora arenicola (strain CNS-205)).